Here is a 464-residue protein sequence, read N- to C-terminus: UDP-N-acetylmuramate--L-alanine ligase (464 aa).

115-121 (GSHGKTT) lines the ATP pocket.

It belongs to the MurCDEF family.

The protein resides in the cytoplasm. It catalyses the reaction UDP-N-acetyl-alpha-D-muramate + L-alanine + ATP = UDP-N-acetyl-alpha-D-muramoyl-L-alanine + ADP + phosphate + H(+). The protein operates within cell wall biogenesis; peptidoglycan biosynthesis. In terms of biological role, cell wall formation. The polypeptide is UDP-N-acetylmuramate--L-alanine ligase (Pelagibacter ubique (strain HTCC1062)).